The sequence spans 274 residues: Kit ligand (274 aa).

The N-terminal stretch at 1 to 25 (MKKTQTWIITCIYLQLLLFNPLVHS) is a signal peptide. Gln-26 is subject to Pyrrolidone carboxylic acid. Topologically, residues 26–215 (QGICRNRVTD…SNSIEDSSLQ (190 aa)) are extracellular. Cystine bridges form between Cys-29/Cys-114 and Cys-68/Cys-164. Asn-90, Asn-97, Asn-145, and Asn-196 each carry an N-linked (GlcNAc...) asparagine glycan. A helical transmembrane segment spans residues 216–238 (WAAVALPAFFSLVIGFAFGALYW). Over 239–274 (KKKQPNLTRTVENRQINEEDNEISMLQEKEREFQEV) the chain is Cytoplasmic.

It belongs to the SCF family. As to quaternary structure, homodimer, non-covalently linked. A soluble form is produced by proteolytic processing of the extracellular domain.

The protein localises to the cytoplasm. It localises to the cytoskeleton. It is found in the cell membrane. Its subcellular location is the cell projection. The protein resides in the lamellipodium. The protein localises to the filopodium. It localises to the secreted. Functionally, stimulates the proliferation of mast cells. Able to augment the proliferation of both myeloid and lymphoid hematopoietic progenitors in bone marrow culture. Also mediates cell-cell adhesion. Acts synergistically with other cytokines, probably interleukins. The protein is Kit ligand (KITLG) of Capra hircus (Goat).